Reading from the N-terminus, the 562-residue chain is Undecaprenyl phosphate-alpha-4-amino-4-deoxy-L-arabinose arabinosyl transferase (562 aa).

Helical transmembrane passes span 14-34 (IKFS…PLNY), 91-111 (FSVR…IYLF), 120-140 (ILSL…IIGT), 142-162 (SVLD…FWLA), 186-206 (FITK…IWLF), 215-235 (TIIH…PWIY), 267-287 (PFWY…GFLF), 302-322 (IEFY…ISKG), 324-344 (LPTY…KNIE), 354-374 (LLKI…IFII), 395-415 (LILC…IIFN), and 425-445 (LSII…IIYA).

The protein belongs to the glycosyltransferase 83 family.

Its subcellular location is the cell inner membrane. The catalysed reaction is 4-amino-4-deoxy-alpha-L-arabinopyranosyl di-trans,octa-cis-undecaprenyl phosphate + lipid IVA = lipid IIA + di-trans,octa-cis-undecaprenyl phosphate.. It functions in the pathway lipopolysaccharide metabolism; 4-amino-4-deoxy-beta-L-arabinose-lipid A biosynthesis. Its function is as follows. Catalyzes the transfer of the L-Ara4N moiety of the glycolipid undecaprenyl phosphate-alpha-L-Ara4N to lipid A. The modified arabinose is attached to lipid A and is required for resistance to polymyxin and cationic antimicrobial peptides. The sequence is that of Undecaprenyl phosphate-alpha-4-amino-4-deoxy-L-arabinose arabinosyl transferase from Wigglesworthia glossinidia brevipalpis.